Here is a 749-residue protein sequence, read N- to C-terminus: cGMP-dependent protein kinase egl-4 (749 aa).

A coiled-coil region spans residues 30-96; it reads EAHELQKLIP…LEQKAQSAAS (67 aa). Residues 87–111 form a disordered region; the sequence is LEQKAQSAASPGQPPSPSPRTDQLG. Residues 234–237, 244–245, Arg-349, 358–361, 368–369, and Tyr-403 each bind 3',5'-cyclic GMP; these read GELA, RT, and GERA. The region spanning 438 to 698 is the Protein kinase domain; the sequence is VKRLATLGVG…VNDIRKHRWF (261 aa). Residues 444 to 452 and Lys-468 contribute to the ATP site; that span reads LGVGGFGRV. The short motif at 461-473 is the Nuclear localization signal element; sequence KSKTYALKALKKK. The active-site Proton acceptor is Asp-562. The AGC-kinase C-terminal domain occupies 699 to 749; the sequence is MGFDWEGLRTKTLKPPILPKVNNPADVTNFDNYPPDNDVPPDEFSGWDEGF. Positions 723-749 are disordered; it reads ADVTNFDNYPPDNDVPPDEFSGWDEGF.

The protein belongs to the protein kinase superfamily. AGC Ser/Thr protein kinase family. cGMP subfamily. Mg(2+) serves as cofactor. In terms of processing, autophosphorylated.

Its subcellular location is the cytoplasm. The protein localises to the nucleus. The enzyme catalyses L-seryl-[protein] + ATP = O-phospho-L-seryl-[protein] + ADP + H(+). It catalyses the reaction L-threonyl-[protein] + ATP = O-phospho-L-threonyl-[protein] + ADP + H(+). Binding of cGMP results in enzyme activation. Its function is as follows. Promotes chemoreceptor gene expression in response to increased cGMP levels by antagonizing the gene repression functions of the class II HDAC hda-4 and the mef-2 transcription factor. Regulates gene expression via recruitment of a histone deacetylase complex containing hda-2, saeg-1 and saeg-2. Represses body size and lifespan through the dbl-1 and insulin pathways, respectively. May also signal through daf-3 and/or daf-5. Role in egg-laying, dauer formation and motility. Regulates behavioral responses to various chemosensory stimuli in sensory neurons. Required for the initiation of long term adaptation to prolonged odor exposure which results in a decrease in odor seeking behavior. May regulate this process by phosphorylating tax-2, a subunit of cyclic nucleotide-gated channel tax-2/tax-4. In ASH sensory neurons, negatively regulates avoidance behavior to some bitter tastants, such as quinine, probably by phosphorylating rgs-2 and rgs-3 which are 2 regulator of G-protein signaling proteins. In AWB sensory neurons, involved in avoidance behavior to some repellent odors. In ASE left (ASEL) sensory neuron, involved in the sensing of environmental alkalinity downstream of receptor-type guanylate cyclase gcy-14. In sensory neurons, involved in the signaling pathway downstream of insulin, TGF-beta and receptor-type guanylate cyclase responsible for inducing quiescence after food intake. Might play a role in aversive olfactory learning in AWC neurons when an odor is associated with food deprivation, depending on the ins-1/age-1 signal from the AIA to the AWC neurons. Probably by regulating neuronal transmission downstream of lin-3 and receptor lin-23 and phospholipase plc-3 in ALA neurons, involved in the decrease in locomotion during the quiescent state that precedes each larval molt. This chain is cGMP-dependent protein kinase egl-4, found in Caenorhabditis briggsae.